Reading from the N-terminus, the 137-residue chain is Nucleoside diphosphate kinase (137 aa).

ATP is bound by residues K9, F57, R85, T91, R102, and N112. Residue H115 is the Pros-phosphohistidine intermediate of the active site.

The protein belongs to the NDK family. As to quaternary structure, homotetramer. Requires Mg(2+) as cofactor.

It is found in the cytoplasm. The catalysed reaction is a 2'-deoxyribonucleoside 5'-diphosphate + ATP = a 2'-deoxyribonucleoside 5'-triphosphate + ADP. The enzyme catalyses a ribonucleoside 5'-diphosphate + ATP = a ribonucleoside 5'-triphosphate + ADP. Functionally, major role in the synthesis of nucleoside triphosphates other than ATP. The ATP gamma phosphate is transferred to the NDP beta phosphate via a ping-pong mechanism, using a phosphorylated active-site intermediate. The polypeptide is Nucleoside diphosphate kinase (Geotalea daltonii (strain DSM 22248 / JCM 15807 / FRC-32) (Geobacter daltonii)).